The primary structure comprises 725 residues: Methionine--tRNA ligase (725 aa).

Residues 27 to 37 (PYANGQIHIGH) carry the 'HIGH' region motif. Residues C158, C161, C171, and C174 each contribute to the Zn(2+) site. The 'KMSKS' region signature appears at 348–352 (KMSKS). Residue K351 participates in ATP binding. The tRNA-binding domain maps to 619 to 725 (DFAKIDLRIA…SGAKPGMRVK (107 aa)).

Belongs to the class-I aminoacyl-tRNA synthetase family. MetG type 1 subfamily. In terms of assembly, homodimer. The cofactor is Zn(2+).

It localises to the cytoplasm. The enzyme catalyses tRNA(Met) + L-methionine + ATP = L-methionyl-tRNA(Met) + AMP + diphosphate. Functionally, is required not only for elongation of protein synthesis but also for the initiation of all mRNA translation through initiator tRNA(fMet) aminoacylation. This Burkholderia pseudomallei (strain 668) protein is Methionine--tRNA ligase.